A 504-amino-acid polypeptide reads, in one-letter code: D-alanine--D-alanyl carrier protein ligase (504 aa).

152–153 (TS) contacts ATP. Residue D197 coordinates D-alanine. Residue 292 to 297 (NTYGPT) coordinates ATP. V301 serves as a coordination point for D-alanine. Residues D383, 394-397 (YNGR), and K492 each bind ATP. D-alanine is bound at residue K492.

This sequence belongs to the ATP-dependent AMP-binding enzyme family. DltA subfamily.

It is found in the cytoplasm. The enzyme catalyses holo-[D-alanyl-carrier protein] + D-alanine + ATP = D-alanyl-[D-alanyl-carrier protein] + AMP + diphosphate. Its pathway is cell wall biogenesis; lipoteichoic acid biosynthesis. In terms of biological role, catalyzes the first step in the D-alanylation of lipoteichoic acid (LTA), the activation of D-alanine and its transfer onto the D-alanyl carrier protein (Dcp) DltC. In an ATP-dependent two-step reaction, forms a high energy D-alanyl-AMP intermediate, followed by transfer of the D-alanyl residue as a thiol ester to the phosphopantheinyl prosthetic group of the Dcp. D-alanylation of LTA plays an important role in modulating the properties of the cell wall in Gram-positive bacteria, influencing the net charge of the cell wall. The polypeptide is D-alanine--D-alanyl carrier protein ligase (Bacillus cereus (strain ZK / E33L)).